The following is a 444-amino-acid chain: Transcription factor PIF5 (444 aa).

Residues 26–39 (EDELVELLWRDGQV) form an involved in interaction with phyB region. Disordered regions lie at residues 154–265 (HCGS…NLSE) and 416–444 (MLGFGSPAGPQSQLSAPATTDSLHMGKIG). Residues 155-171 (CGSNQSTNIHQATTLPV) are compositionally biased toward polar residues. A compositionally biased stretch (basic and acidic residues) spans 175 to 185 (DRSKNVEERLD). Residues 187–197 (SSGGSSGCSYG) are compositionally biased toward low complexity. Polar residues predominate over residues 224 to 244 (ESVSQSDIGLTSTDDQTMGNK). The segment covering 256–265 (RAAEVHNLSE) has biased composition (basic and acidic residues). A bHLH domain is found at 256 to 305 (RAAEVHNLSERRRRDRINERMKALQELIPHCSRTDKASILDEAIDYLKSL). The segment covering 424-437 (GPQSQLSAPATTDS) has biased composition (polar residues). At Ser-437 the chain carries Phosphoserine.

As to quaternary structure, homodimer. Interacts specifically with the Pfr form of phytochrome B and with TOC1/APRR1. May form a heterodimer with PIF3. Interacts with PHYB, CRY1 and CRY2 in the nucleus in response to low blue light (LBL). Interacts with TOPP4. Associates to PTAC12/HMR/PAP5 which acts as a transcriptional coactivator. Post-translationally, phosphorylated. Additional phosphorylations induced within 60 seconds following phytochrome B photoactivation. In terms of processing, dephosphorylated by TOPP4 during photomorphogenesis, leading to subsequent degradation of PIF5 by the proteasomal pathway. In terms of tissue distribution, mainly expressed in leaves and seedlings, and, to a lower extent, in stems, fruits, flowers and roots.

The protein resides in the nucleus. Its function is as follows. Transcription factor acting negatively in the phytochrome B signaling pathway to promote the shade-avoidance response. Regulates PHYB abundance at the post-transcriptional level, possibly via the ubiquitin-proteasome pathway. Promotes ethylene activity in the dark. May regulate the expression of a subset of genes by binding to the G-box motif. Might be involved in the integration of light-signals to control both circadian and photomorphogenic processes. Activated by CRY1 and CRY2 in response to low blue light (LBL) by direct binding at chromatin on E-box variant 5'-CA[CT]GTG-3' to stimulate specific gene expression to adapt global physiology (e.g. hypocotyl elongation in low blue light). This Arabidopsis thaliana (Mouse-ear cress) protein is Transcription factor PIF5.